A 317-amino-acid chain; its full sequence is Acetyl-coenzyme A carboxylase carboxyl transferase subunit alpha (317 aa).

The 256-residue stretch at 37–292 (QISQKLEDTK…EEYILKAFNE (256 aa)) folds into the CoA carboxyltransferase C-terminal domain.

It belongs to the AccA family. As to quaternary structure, acetyl-CoA carboxylase is a heterohexamer composed of biotin carboxyl carrier protein (AccB), biotin carboxylase (AccC) and two subunits each of ACCase subunit alpha (AccA) and ACCase subunit beta (AccD).

The protein resides in the cytoplasm. It carries out the reaction N(6)-carboxybiotinyl-L-lysyl-[protein] + acetyl-CoA = N(6)-biotinyl-L-lysyl-[protein] + malonyl-CoA. It participates in lipid metabolism; malonyl-CoA biosynthesis; malonyl-CoA from acetyl-CoA: step 1/1. Component of the acetyl coenzyme A carboxylase (ACC) complex. First, biotin carboxylase catalyzes the carboxylation of biotin on its carrier protein (BCCP) and then the CO(2) group is transferred by the carboxyltransferase to acetyl-CoA to form malonyl-CoA. This chain is Acetyl-coenzyme A carboxylase carboxyl transferase subunit alpha, found in Flavobacterium psychrophilum (strain ATCC 49511 / DSM 21280 / CIP 103535 / JIP02/86).